A 315-amino-acid polypeptide reads, in one-letter code: MSQTTPAVRTFQDLILALQNYWAEQGCVVLQPYDMEVGAGTFHTATFLRAIGPETWNAAYVQPSRRPTDGRYGENPNRLQHYYQFQVVLKPNPENFQELYLGSLKAIGIDPLVHDIRFVEDNWESPTLGAWGLGWEIWLNGMEVTQFTYFQQVGGIECYPVTGEITYGLERLAMYLQGVDSVYDLVWTDGPFGKVTYGDVFHQNEVEQSTFNFEHANVPKLFELFDFYESEANRLIALELPLPTYEMVLKASHTFNLLDARRAISVTERQRYILRVRTLARAVAQSYLQARARLGFPMATPELRDEVLAKLKEAE.

It belongs to the class-II aminoacyl-tRNA synthetase family. In terms of assembly, tetramer of two alpha and two beta subunits.

It is found in the cytoplasm. The catalysed reaction is tRNA(Gly) + glycine + ATP = glycyl-tRNA(Gly) + AMP + diphosphate. This chain is Glycine--tRNA ligase alpha subunit, found in Pseudomonas aeruginosa (strain LESB58).